A 154-amino-acid polypeptide reads, in one-letter code: Large ribosomal subunit protein uL30 (154 aa).

The interval P114–G139 is disordered. The segment covering H119–K129 has biased composition (basic residues).

It belongs to the universal ribosomal protein uL30 family. Part of the 50S ribosomal subunit.

The sequence is that of Large ribosomal subunit protein uL30 from Haloquadratum walsbyi (strain DSM 16790 / HBSQ001).